Reading from the N-terminus, the 230-residue chain is 2,3-bisphosphoglycerate-dependent phosphoglycerate mutase (230 aa).

Substrate contacts are provided by residues 8-15 (RHGESEWN), 21-22 (TG), arginine 60, 87-90 (ERHY), lysine 98, 114-115 (RR), and 183-184 (GN). Histidine 9 (tele-phosphohistidine intermediate) is an active-site residue. Glutamate 87 (proton donor/acceptor) is an active-site residue.

The protein belongs to the phosphoglycerate mutase family. BPG-dependent PGAM subfamily.

It carries out the reaction (2R)-2-phosphoglycerate = (2R)-3-phosphoglycerate. The protein operates within carbohydrate degradation; glycolysis; pyruvate from D-glyceraldehyde 3-phosphate: step 3/5. In terms of biological role, catalyzes the interconversion of 2-phosphoglycerate and 3-phosphoglycerate. The chain is 2,3-bisphosphoglycerate-dependent phosphoglycerate mutase from Streptococcus pneumoniae (strain ATCC BAA-255 / R6).